The primary structure comprises 212 residues: 3-oxo-tetronate 4-phosphate decarboxylase (212 aa).

The active-site Proton acceptor is the Glu-79. Glu-79, His-98, and His-100 together coordinate Zn(2+). Tyr-125 functions as the Proton donor in the catalytic mechanism. His-165 is a Zn(2+) binding site.

The protein belongs to the aldolase class II family. AraD/FucA subfamily. The cofactor is Zn(2+).

It carries out the reaction 3-dehydro-4-O-phospho-D-erythronate + H(+) = dihydroxyacetone phosphate + CO2. The catalysed reaction is 3-dehydro-4-O-phospho-L-erythronate + H(+) = dihydroxyacetone phosphate + CO2. Its function is as follows. Catalyzes the decarboxylation of 3-oxo-tetronate 4-phosphate to dihydroxyacetone phosphate (DHAP) and CO(2). The sequence is that of 3-oxo-tetronate 4-phosphate decarboxylase from Escherichia coli (strain K12).